The following is a 238-amino-acid chain: Protein odd-skipped-related 2 (238 aa).

The interval 105–126 is disordered; the sequence is EDPPVTGQSRLSPERRPARGRL. 3 consecutive C2H2-type zinc fingers follow at residues 134–156, 162–184, and 190–212; these read FICRFCGRHFTKSYNLLIHERTH, YTCDICHKAFRRQDHLRDHRYIH, and FKCQECGKGFCQSRTLAVHKTLH.

This sequence belongs to the Odd C2H2-type zinc-finger protein family. As to expression, at the 8-somite stage, expressed in the pronephros, with weak generalized expression elsewhere. At 24 hpf, expressed in the kidney tubules and the anterior duct, and also in the gut. At 60 hpf, expressed in the tubules and the pectoral fin buds.

Its subcellular location is the nucleus. Functionally, transcriptional repressor. Required for pronephric kidney development. This chain is Protein odd-skipped-related 2, found in Danio rerio (Zebrafish).